The chain runs to 509 residues: Subtelomeric hrmA-associated cluster protein AFUA_5G14880 (509 aa).

Part of the subtelomeric hrmA-associated cluster (HAC) containing genes that alter the hyphal surface (such as reduced total chitin or increased beta-glucan exposure) and perturb inter-hyphal interactions within the developing biofilms, resulting in a loss of vertically aligned polarized growing filaments. Consequently, this hypoxia-typic morphotype (called H-MORPH) with altered biofilm architecture leads to increased hypoxia fitness, increased host inflammation, rapid disease progression, and mortality in a murine model of invasive aspergillosis. The polypeptide is Subtelomeric hrmA-associated cluster protein AFUA_5G14880 (Aspergillus fumigatus (strain ATCC MYA-4609 / CBS 101355 / FGSC A1100 / Af293) (Neosartorya fumigata)).